Here is a 193-residue protein sequence, read N- to C-terminus: dTTP/UTP pyrophosphatase (193 aa).

The Proton acceptor role is filled by Asp75.

It belongs to the Maf family. YhdE subfamily. A divalent metal cation serves as cofactor.

It localises to the cytoplasm. The enzyme catalyses dTTP + H2O = dTMP + diphosphate + H(+). It carries out the reaction UTP + H2O = UMP + diphosphate + H(+). In terms of biological role, nucleoside triphosphate pyrophosphatase that hydrolyzes dTTP and UTP. May have a dual role in cell division arrest and in preventing the incorporation of modified nucleotides into cellular nucleic acids. The polypeptide is dTTP/UTP pyrophosphatase (Koribacter versatilis (strain Ellin345)).